The following is a 162-amino-acid chain: Ribosomal RNA large subunit methyltransferase H (162 aa).

S-adenosyl-L-methionine-binding positions include Leu-78, Gly-109, and Leu-128–Leu-133.

It belongs to the RNA methyltransferase RlmH family. Homodimer.

Its subcellular location is the cytoplasm. It catalyses the reaction pseudouridine(1915) in 23S rRNA + S-adenosyl-L-methionine = N(3)-methylpseudouridine(1915) in 23S rRNA + S-adenosyl-L-homocysteine + H(+). Functionally, specifically methylates the pseudouridine at position 1915 (m3Psi1915) in 23S rRNA. The chain is Ribosomal RNA large subunit methyltransferase H from Psychrobacter arcticus (strain DSM 17307 / VKM B-2377 / 273-4).